Reading from the N-terminus, the 218-residue chain is Phosphoribosylformylglycinamidine synthase subunit PurQ (218 aa).

Positions 2–218 (RVGVIRFPGS…FFRGILKFRG (217 aa)) constitute a Glutamine amidotransferase type-1 domain. The Nucleophile role is filled by C85. Catalysis depends on residues H192 and E194.

In terms of assembly, part of the FGAM synthase complex composed of 1 PurL, 1 PurQ and 2 PurS subunits.

The protein localises to the cytoplasm. It catalyses the reaction N(2)-formyl-N(1)-(5-phospho-beta-D-ribosyl)glycinamide + L-glutamine + ATP + H2O = 2-formamido-N(1)-(5-O-phospho-beta-D-ribosyl)acetamidine + L-glutamate + ADP + phosphate + H(+). It carries out the reaction L-glutamine + H2O = L-glutamate + NH4(+). Its pathway is purine metabolism; IMP biosynthesis via de novo pathway; 5-amino-1-(5-phospho-D-ribosyl)imidazole from N(2)-formyl-N(1)-(5-phospho-D-ribosyl)glycinamide: step 1/2. In terms of biological role, part of the phosphoribosylformylglycinamidine synthase complex involved in the purines biosynthetic pathway. Catalyzes the ATP-dependent conversion of formylglycinamide ribonucleotide (FGAR) and glutamine to yield formylglycinamidine ribonucleotide (FGAM) and glutamate. The FGAM synthase complex is composed of three subunits. PurQ produces an ammonia molecule by converting glutamine to glutamate. PurL transfers the ammonia molecule to FGAR to form FGAM in an ATP-dependent manner. PurS interacts with PurQ and PurL and is thought to assist in the transfer of the ammonia molecule from PurQ to PurL. In Methanothermobacter thermautotrophicus (strain ATCC 29096 / DSM 1053 / JCM 10044 / NBRC 100330 / Delta H) (Methanobacterium thermoautotrophicum), this protein is Phosphoribosylformylglycinamidine synthase subunit PurQ.